Reading from the N-terminus, the 110-residue chain is uncharacterized protein (110 aa).

This is an uncharacterized protein from Methanocaldococcus jannaschii (strain ATCC 43067 / DSM 2661 / JAL-1 / JCM 10045 / NBRC 100440) (Methanococcus jannaschii).